The chain runs to 898 residues: Filament-like plant protein 7 (898 aa).

2 coiled-coil regions span residues 23 to 224 (EVVA…TAEA) and 287 to 320 (EKIN…LQFS). Disordered regions lie at residues 429 to 482 (DNRP…DIKS), 693 to 723 (PGNQ…KLEE), and 777 to 835 (KSNN…GGNS). Low complexity predominate over residues 434-459 (SSPICSSDSISATGPVENESNENSSE). Polar residues predominate over residues 460 to 469 (ATKTSGTVYS). The stretch at 703-764 (VEEEANDKTA…KALTNSKETA (62 aa)) forms a coiled coil. Residues 808 to 822 (MKAEDHNTGESKDQK) are compositionally biased toward basic and acidic residues.

Belongs to the FPP family. In terms of assembly, interacts with WPP/MAF proteins.

In Arabidopsis thaliana (Mouse-ear cress), this protein is Filament-like plant protein 7 (FPP7).